Reading from the N-terminus, the 590-residue chain is Urease subunit alpha (590 aa).

Positions 134-590 constitute a Urease domain; that stretch reads GGIDSHIHFI…LPLAQRYFLF (457 aa). H139, H141, and K222 together coordinate Ni(2+). K222 carries the post-translational modification N6-carboxylysine. H224 contributes to the substrate binding site. Ni(2+)-binding residues include H251 and H277. The active-site Proton donor is the H325. D365 serves as a coordination point for Ni(2+). Positions 388–416 are disordered; it reads QQRGWLSPPAAGQGAGLSSAAGQGVDHDT. Residues 393-411 are compositionally biased toward low complexity; the sequence is LSPPAAGQGAGLSSAAGQG.

It belongs to the metallo-dependent hydrolases superfamily. Urease alpha subunit family. As to quaternary structure, heterotrimer of UreA (gamma), UreB (beta) and UreC (alpha) subunits. Three heterotrimers associate to form the active enzyme. Ni cation serves as cofactor. Carboxylation allows a single lysine to coordinate two nickel ions.

It is found in the cytoplasm. The enzyme catalyses urea + 2 H2O + H(+) = hydrogencarbonate + 2 NH4(+). The protein operates within nitrogen metabolism; urea degradation; CO(2) and NH(3) from urea (urease route): step 1/1. In Verminephrobacter eiseniae (strain EF01-2), this protein is Urease subunit alpha.